A 203-amino-acid polypeptide reads, in one-letter code: MKLRWLLILVVFLAGCSSKHDYTNPPWNPEVPVKRAMQWMPISEKAGAAWGVDPQLITAIIAIESGGNPAVVSKSGAVGLMQLKPSTSGRDVYRRMGWRGEPSVSELKNPERNISMGAAYLSILENGPLAGIKDPQVMRYAVVVSYANGAGALLRTFSSNRQDAIEEINDLDADEFFEHVVKKHPAPQAPRYIWKLQKALDAM.

The first 15 residues, 1-15 (MKLRWLLILVVFLAG), serve as a signal peptide directing secretion. The N-palmitoyl cysteine moiety is linked to residue C16. C16 carries the S-diacylglycerol cysteine lipid modification.

This sequence belongs to the transglycosylase Slt family.

It is found in the cell outer membrane. It carries out the reaction Endolytic cleavage of the (1-&gt;4)-beta-glycosidic linkage between N-acetylmuramic acid (MurNAc) and N-acetylglucosamine (GlcNAc) residues in peptidoglycan with concomitant formation of a 1,6-anhydrobond in the MurNAc residue.. Murein-degrading enzyme. May play a role in recycling of muropeptides during cell elongation and/or cell division. Preferentially cleaves at a distance of more than two disaccharide units from the ends of the glycan chain. This chain is Endo-type membrane-bound lytic murein transglycosylase A, found in Klebsiella pneumoniae subsp. pneumoniae (strain ATCC 700721 / MGH 78578).